Reading from the N-terminus, the 101-residue chain is Putative pterin-4-alpha-carbinolamine dehydratase (101 aa).

The protein belongs to the pterin-4-alpha-carbinolamine dehydratase family.

The catalysed reaction is (4aS,6R)-4a-hydroxy-L-erythro-5,6,7,8-tetrahydrobiopterin = (6R)-L-erythro-6,7-dihydrobiopterin + H2O. The polypeptide is Putative pterin-4-alpha-carbinolamine dehydratase (Rhizobium rhizogenes (strain K84 / ATCC BAA-868) (Agrobacterium radiobacter)).